The sequence spans 426 residues: Phosphoribosylamine--glycine ligase (426 aa).

Residues 107-313 (KDFMQKYGVK…FLNVINSALN (207 aa)) enclose the ATP-grasp domain. 133–194 (LDKISYPVVI…EEFLDGVEIS (62 aa)) is an ATP binding site. Positions 283 and 285 each coordinate Mg(2+).

The protein belongs to the GARS family. It depends on Mg(2+) as a cofactor. Requires Mn(2+) as cofactor.

The catalysed reaction is 5-phospho-beta-D-ribosylamine + glycine + ATP = N(1)-(5-phospho-beta-D-ribosyl)glycinamide + ADP + phosphate + H(+). Its pathway is purine metabolism; IMP biosynthesis via de novo pathway; N(1)-(5-phospho-D-ribosyl)glycinamide from 5-phospho-alpha-D-ribose 1-diphosphate: step 2/2. In Fusobacterium nucleatum subsp. nucleatum (strain ATCC 25586 / DSM 15643 / BCRC 10681 / CIP 101130 / JCM 8532 / KCTC 2640 / LMG 13131 / VPI 4355), this protein is Phosphoribosylamine--glycine ligase.